Reading from the N-terminus, the 471-residue chain is NADH-quinone oxidoreductase subunit N (471 aa).

14 helical membrane passes run 6–26 (FILPEIFISLSIMFLLLLGVY), 30–50 (SSNIVHNLAVGSLLITGILIF), 70–90 (LSSFMKILTILGGAFVLSIST), 98–118 (IFLIEYPVLILSSILGMMVMI), 123–143 (LMVFYIGLELQSLALYVLASF), 158–178 (FVLSALSSGLLLYGCSLVYGF), 198–218 (LTFGIVFILVGLAFKISAVPF), 230–250 (PTAVTLFFAIVPKVAALTVFI), 264–284 (WQPILIFLSIASMIFGAIAAI), 292–312 (LIAYSSIGHMGYALAGLSTGS), 320–340 (IVYMSIYLVMNLAFFSCLLML), 365–385 (LSLLAILFSLAGIPPLAGFFA), 400–420 (FLAIVGLLSTVIAAFYYLKII), and 438–458 (IWLKGSLTFSTLLILLYFIFP).

The protein belongs to the complex I subunit 2 family. In terms of assembly, NDH-1 is composed of 14 different subunits. Subunits NuoA, H, J, K, L, M, N constitute the membrane sector of the complex.

Its subcellular location is the cell inner membrane. It carries out the reaction a quinone + NADH + 5 H(+)(in) = a quinol + NAD(+) + 4 H(+)(out). Its function is as follows. NDH-1 shuttles electrons from NADH, via FMN and iron-sulfur (Fe-S) centers, to quinones in the respiratory chain. The immediate electron acceptor for the enzyme in this species is believed to be ubiquinone. Couples the redox reaction to proton translocation (for every two electrons transferred, four hydrogen ions are translocated across the cytoplasmic membrane), and thus conserves the redox energy in a proton gradient. The sequence is that of NADH-quinone oxidoreductase subunit N from Pelagibacter ubique (strain HTCC1062).